The sequence spans 341 residues: Ribosomal RNA small subunit methyltransferase C (341 aa).

It belongs to the methyltransferase superfamily. RsmC family. Monomer.

The protein resides in the cytoplasm. It catalyses the reaction guanosine(1207) in 16S rRNA + S-adenosyl-L-methionine = N(2)-methylguanosine(1207) in 16S rRNA + S-adenosyl-L-homocysteine + H(+). Its function is as follows. Specifically methylates the guanine in position 1207 of 16S rRNA in the 30S particle. The chain is Ribosomal RNA small subunit methyltransferase C from Shewanella amazonensis (strain ATCC BAA-1098 / SB2B).